The chain runs to 273 residues: Nucleotide-binding protein TTHA0319 (273 aa).

8–15 (GLSGAGKT) serves as a coordination point for ATP. 57 to 60 (DARA) contributes to the GTP binding site.

The protein belongs to the RapZ-like family.

In terms of biological role, displays ATPase and GTPase activities. This Thermus thermophilus (strain ATCC 27634 / DSM 579 / HB8) protein is Nucleotide-binding protein TTHA0319.